A 352-amino-acid polypeptide reads, in one-letter code: Alanine racemase (352 aa).

The Proton acceptor; specific for D-alanine role is filled by lysine 33. N6-(pyridoxal phosphate)lysine is present on lysine 33. Arginine 129 serves as a coordination point for substrate. The Proton acceptor; specific for L-alanine role is filled by tyrosine 250. Methionine 298 contacts substrate.

It belongs to the alanine racemase family. Pyridoxal 5'-phosphate serves as cofactor.

The enzyme catalyses L-alanine = D-alanine. It functions in the pathway amino-acid biosynthesis; D-alanine biosynthesis; D-alanine from L-alanine: step 1/1. Its function is as follows. Catalyzes the interconversion of L-alanine and D-alanine. May also act on other amino acids. The sequence is that of Alanine racemase (alr) from Neisseria meningitidis serogroup B (strain ATCC BAA-335 / MC58).